The chain runs to 427 residues: Lipophilic envelope-spanning tunnel protein A (427 aa).

At 1–75 (MALNTPQITP…LTRLAAMAFT (75 aa)) the chain is on the cytoplasmic side. Residues 76–96 (MLLLMPFAWGEPLLHIWLLGI) form a helical membrane-spanning segment. Residues 97–120 (RIDANVMQGIWQMTKQGDAITGSM) lie on the Periplasmic side of the membrane. Residues 121–141 (VFFCVIGAPLILVTSIAYLWF) form a helical membrane-spanning segment. Residues 142–269 (GNRLGMNLRP…RHSLQKCWAA (128 aa)) are Cytoplasmic-facing. A helical transmembrane segment spans residues 270 to 290 (LLASIVLLLPANLLPISIIYL). At 291-310 (NGGRQEDTILSGIMSLASSN) the chain is on the periplasmic side. Residues 311-331 (IAVAGIVFIASILVPFTKVIV) traverse the membrane as a helical segment. Over 332–350 (MFTLLLSIHFKCQQGLRTR) the chain is Cytoplasmic. Residues 351–371 (ILLLRMVTWIGRWSMLDLFVI) form a helical membrane-spanning segment. Residues 372–382 (SLTMSLINRDQ) are Periplasmic-facing. Residues 383–403 (ILAFTMGPAAFYFGAAVILTI) traverse the membrane as a helical segment. Over 404 to 427 (LAVEWLDSRLLWDAHESGNARFDD) the chain is Cytoplasmic.

The protein belongs to the PqiA family. May interact with LetB in the inner membrane.

The protein localises to the cell inner membrane. In terms of biological role, could be part, together with LetB, of a system that transports lipids between the inner membrane and the outer membrane. Contributes to membrane integrity. The chain is Lipophilic envelope-spanning tunnel protein A from Escherichia coli (strain K12).